Reading from the N-terminus, the 278-residue chain is 4-deoxy-L-threo-5-hexosulose-uronate ketol-isomerase (278 aa).

Zn(2+) is bound by residues His196, His198, Glu203, and His245.

Belongs to the KduI family. Zn(2+) serves as cofactor.

The enzyme catalyses 5-dehydro-4-deoxy-D-glucuronate = 3-deoxy-D-glycero-2,5-hexodiulosonate. It functions in the pathway glycan metabolism; pectin degradation; 2-dehydro-3-deoxy-D-gluconate from pectin: step 4/5. Catalyzes the isomerization of 5-dehydro-4-deoxy-D-glucuronate to 3-deoxy-D-glycero-2,5-hexodiulosonate. The sequence is that of 4-deoxy-L-threo-5-hexosulose-uronate ketol-isomerase from Paraburkholderia phytofirmans (strain DSM 17436 / LMG 22146 / PsJN) (Burkholderia phytofirmans).